We begin with the raw amino-acid sequence, 914 residues long: MGKSEADEDAQFLPMNRPRSSSAASQTSSDSGLSVESALIRNSTYGKTPDEAYNPAGDPRYRDIEDGEAESDQPFLPSRKGSGARARRVFWGLLLLCLAGWVLAFVLFLIQGRSGYSATSEELQQHEADSSAGVTSDGKPVTLKQVLSGDWLPRSHGIAWIAGPDGEDGLLVEAGEDGGEGFLRVKDIRARHGDDAGTLKSRVLMKKSTFYAGQRSILTRLTWPSPDLKKVLVLSDYEKNWRHSYTGLYWIFDVDSQTAEPLDPDVPEGRVQLASWSPNSDAVVFVRDNNMFLRKLSSDKVVPITKDGGKDLFYGVPDWVYEEEVLSGNSATWWSNDAKYVAFLRTNESTVPEYPVQYFLSRPSGKKPLPGLEDYPDVRQIKYPKAGAPNPVVNLQFYNVEKNEVFSVEVPDDFADDDRIIIEVLWAAESNVLVRATNRESDVLKIFLIDTESRTGKMVRLEDIVGLDGGWVEPSQSTRFIPADPAAGRPNDGYIDTVIHDGYDHLAYFTPLDNPEPIMLTTGEWEVVEAPTAVDLRRGLVYFVATKEAPTQRHVYQVQLDGSNLKPLTDTSKPGYYHVSFSDGTAYALLSYQGPSIPWQAIINTEGDDVVFEETIEENPELARMVETYAIPSKVFSNITIDGFTLQMVERRPPHFNPHKKYPVLFFLYGGPGSQTVDRKFTIDFQSYVASNLGYIVVTLDGRGTGFIGREARCIIRGNLGYYEAHDQITAAKMFAEKSYVDESRMAIWGWSYGGFMTLKTLEQDAGQTFQYGMAVAPVTDWRFYDSIYTERYMHTPQHNPSGYDNSSITDMAALEENVRFLVMHGASDDNVHLQNTLTLIDKLDLSNVQNYDVHFYPDSDHSIFFHNAHYMVYERLSNWLVNAFNGEWHRIAAPVPDNSMWQRFKRALPVFVH.

The span at 1-10 (MGKSEADEDA) shows a compositional bias: acidic residues. Residues 1 to 81 (MGKSEADEDA…DQPFLPSRKG (81 aa)) form a disordered region. Residues 1–89 (MGKSEADEDA…KGSGARARRV (89 aa)) lie on the Cytoplasmic side of the membrane. Residues 20–34 (SSSAASQTSSDSGLS) show a composition bias toward low complexity. A helical; Signal-anchor for type II membrane protein membrane pass occupies residues 90–110 (FWGLLLLCLAGWVLAFVLFLI). Over 111–914 (QGRSGYSATS…FKRALPVFVH (804 aa)) the chain is Vacuolar. N-linked (GlcNAc...) asparagine glycosylation is found at N347 and N638. S752 serves as the catalytic Charge relay system. N806 carries an N-linked (GlcNAc...) asparagine glycan. Active-site charge relay system residues include D829 and H862.

The protein belongs to the peptidase S9B family.

The protein resides in the vacuole membrane. The enzyme catalyses Release of an N-terminal dipeptide, Xaa-Yaa-|-Zaa-, from a polypeptide, preferentially when Yaa is Pro, provided Zaa is neither Pro nor hydroxyproline.. In terms of biological role, type IV dipeptidyl-peptidase which removes N-terminal dipeptides sequentially from polypeptides having unsubstituted N-termini provided that the penultimate residue is proline. This is Probable dipeptidyl-aminopeptidase B (dapB) from Aspergillus terreus (strain NIH 2624 / FGSC A1156).